A 925-amino-acid chain; its full sequence is Protein translocase subunit SecA (925 aa).

ATP contacts are provided by residues Gln-87, 105–109, and Asp-515; that span reads GEGKT. Positions 909, 911, 920, and 921 each coordinate Zn(2+).

The protein belongs to the SecA family. As to quaternary structure, monomer and homodimer. Part of the essential Sec protein translocation apparatus which comprises SecA, SecYEG and auxiliary proteins SecDF-YajC and YidC. It depends on Zn(2+) as a cofactor.

The protein resides in the cell inner membrane. It is found in the cytoplasm. The enzyme catalyses ATP + H2O + cellular proteinSide 1 = ADP + phosphate + cellular proteinSide 2.. Its function is as follows. Part of the Sec protein translocase complex. Interacts with the SecYEG preprotein conducting channel. Has a central role in coupling the hydrolysis of ATP to the transfer of proteins into and across the cell membrane, serving both as a receptor for the preprotein-SecB complex and as an ATP-driven molecular motor driving the stepwise translocation of polypeptide chains across the membrane. This is Protein translocase subunit SecA from Cupriavidus necator (strain ATCC 17699 / DSM 428 / KCTC 22496 / NCIMB 10442 / H16 / Stanier 337) (Ralstonia eutropha).